The sequence spans 219 residues: uncharacterized protein (219 aa).

Positions 57–158 (QLEHMTRAAM…LSEASRQTLL (102 aa)) constitute an HD domain.

This is an uncharacterized protein from Acanthamoeba polyphaga mimivirus (APMV).